The sequence spans 62 residues: Small ribosomal subunit protein bS21 (62 aa).

Over residues 43-52 (VKKKLKSEAA) the composition is skewed to basic and acidic residues. Residues 43–62 (VKKKLKSEAARKRKNRRRFK) are disordered. The span at 53 to 62 (RKRKNRRRFK) shows a compositional bias: basic residues.

It belongs to the bacterial ribosomal protein bS21 family.

This Lactiplantibacillus plantarum (strain ATCC BAA-793 / NCIMB 8826 / WCFS1) (Lactobacillus plantarum) protein is Small ribosomal subunit protein bS21.